Reading from the N-terminus, the 419-residue chain is Chaperone protein dnaJ 2 (419 aa).

Residues 14–75 form the J domain; it reads KFYEILGVPK…EKREIYDQYG (62 aa). The CR-type zinc finger occupies 136 to 220; it reads GTTKKLSLSR…CKGEKVVSEK (85 aa). The Zn(2+) site is built by Cys149, Cys152, Cys165, Cys168, Cys192, Cys195, Cys208, and Cys211. CXXCXGXG motif repeat units follow at residues 149–156, 165–172, 192–199, and 208–215; these read CSKCNGKG, CGGCQGSG, CNDCKGTG, and CPQCKGEK. Basic and acidic residues predominate over residues 378–391; that stretch reads TTLHDVNIEDEMKR. A disordered region spans residues 378-419; that stretch reads TTLHDVNIEDEMKRKAQAQREAYDDDEEDHPGGAQRVQCAQQ. At Cys416 the chain carries Cysteine methyl ester. The S-farnesyl cysteine moiety is linked to residue Cys416. Positions 417–419 are cleaved as a propeptide — removed in mature form; it reads AQQ.

It belongs to the DnaJ family. A/I subfamily. As to quaternary structure, homodimer. Zn(2+) serves as cofactor. Post-translationally, farnesylated. Expressed in both etiolated and light-grown tissues.

The protein resides in the membrane. Plays a continuous role in plant development probably in the structural organization of compartments. In Arabidopsis thaliana (Mouse-ear cress), this protein is Chaperone protein dnaJ 2 (ATJ2).